Here is a 332-residue protein sequence, read N- to C-terminus: Methionine import ATP-binding protein MetN (332 aa).

The region spanning 2–239 (ITFQDVSKTY…PASDTARRFV (238 aa)) is the ABC transporter domain. Residue 36-43 (GASGAGKS) participates in ATP binding.

The protein belongs to the ABC transporter superfamily. Methionine importer (TC 3.A.1.24) family. The complex is composed of two ATP-binding proteins (MetN), two transmembrane proteins (MetI) and a solute-binding protein (MetQ).

Its subcellular location is the cell inner membrane. The enzyme catalyses L-methionine(out) + ATP + H2O = L-methionine(in) + ADP + phosphate + H(+). The catalysed reaction is D-methionine(out) + ATP + H2O = D-methionine(in) + ADP + phosphate + H(+). Functionally, part of the ABC transporter complex MetNIQ involved in methionine import. Responsible for energy coupling to the transport system. The polypeptide is Methionine import ATP-binding protein MetN (Caulobacter vibrioides (strain ATCC 19089 / CIP 103742 / CB 15) (Caulobacter crescentus)).